Reading from the N-terminus, the 957-residue chain is AP2-associated protein kinase 1 (957 aa).

The residue at position 1 (Met1) is an N-acetylmethionine. Residues 1–11 (MKKFFDSRREQ) are compositionally biased toward basic and acidic residues. The interval 1–25 (MKKFFDSRREQGGSGLGSGSSGGGG) is disordered. Residues 12 to 25 (GGSGLGSGSSGGGG) are compositionally biased toward gly residues. The residue at position 14 (Ser14) is a Phosphoserine. The region spanning 46–315 (VTVDEVLAEG…QVSYFSFKLL (270 aa)) is the Protein kinase domain. ATP is bound by residues 52–60 (LAEGGFAIV) and Lys74. The active-site Proton acceptor is Asp176. Tyr234 is modified (phosphotyrosine). Position 235 is a phosphoserine (Ser235). 2 disordered regions span residues 326–506 (NSPI…AVHP) and 563–629 (TAAA…AGHR). Residues Thr354 and Thr389 each carry the phosphothreonine modification. An Omega-N-methylarginine modification is found at Arg391. The span at 436-448 (PQAPPTSQQPPSA) shows a compositional bias: pro residues. Phosphothreonine is present on Thr441. 2 stretches are compositionally biased toward low complexity: residues 449–506 (PAQA…AVHP) and 563–601 (TAAAAPQPQAQPAAAASPAPAQEPAQIQAPVRQQPKVQT). Thr602 carries the post-translational modification Phosphothreonine. A compositionally biased stretch (polar residues) spans 607-617 (IQGQKLGSLTP). At Ser614 the chain carries Phosphoserine. Thr616 is subject to Phosphothreonine. Phosphoserine occurs at positions 619, 620, 633, and 646. Thr649 carries the phosphothreonine modification. Positions 660–697 (SLNKSKSATTTPSGSPRASQQNVYNPSEGSTWNPFDDD) are disordered. The span at 668-692 (TTTPSGSPRASQQNVYNPSEGSTWN) shows a compositional bias: polar residues. Position 683 is a phosphotyrosine (Tyr683). 4 positions are modified to phosphoserine: Ser727, Ser842, Ser933, and Ser934. The segment at 819–956 (EKADVAVESL…SLLLVDQLID (138 aa)) is clathrin-binding domain (CBD). Disordered regions lie at residues 832-855 (LEPPVPQRLPSQTESVTSNRTDSL) and 919-941 (VLITKNPQGGHSRNSSGSSESSL). Residues 840-855 (LPSQTESVTSNRTDSL) show a composition bias toward polar residues. Residues 927–940 (GGHSRNSSGSSESS) are compositionally biased toward low complexity.

It belongs to the protein kinase superfamily. Ser/Thr protein kinase family. Interacts (via CBD domain) with clathrin. Interacts with AP-2 complex. Interacts with NUMB. Interacts with alpha-adaptin. Interacts with EPS15 isoform 2. Interacts with membrane-bound activated NOTCH1 but not with the inactive full-length form of NOTCH1. Preferentially interacts with monoubiquitinated activated NOTCH1 compared to the non-ubiquitinated form. In terms of processing, autophosphorylated. In terms of tissue distribution, detected in brain (at protein level).

It localises to the cell membrane. Its subcellular location is the membrane. The protein localises to the clathrin-coated pit. It is found in the presynapse. It catalyses the reaction L-seryl-[protein] + ATP = O-phospho-L-seryl-[protein] + ADP + H(+). The enzyme catalyses L-threonyl-[protein] + ATP = O-phospho-L-threonyl-[protein] + ADP + H(+). With respect to regulation, stimulated by clathrin. Functionally, regulates clathrin-mediated endocytosis by phosphorylating the AP2M1/mu2 subunit of the adaptor protein complex 2 (AP-2) which ensures high affinity binding of AP-2 to cargo membrane proteins during the initial stages of endocytosis. Preferentially, may phosphorylate substrates on threonine residues. Regulates phosphorylation of other AP-2 subunits as well as AP-2 localization and AP-2-mediated internalization of ligand complexes. Phosphorylates NUMB and regulates its cellular localization, promoting NUMB localization to endosomes. Binds to and stabilizes the activated form of NOTCH1, increases its localization in endosomes and regulates its transcriptional activity. This is AP2-associated protein kinase 1 (AAK1) from Bos taurus (Bovine).